The sequence spans 155 residues: MRIGQGVDVHAFGDGDKIVIGGVVIPYERGLVAHSDGDVLLHALCDALLGAAALGDIGKHFPDTDSAYKNACSRTLLRMVYSKLKAKGYSLVNADMTIVAQAPKMAPHISDMRAKIAEDLDTHIDNINVKATTTEQLGFNGRKEGITALATVLIK.

Residues Asp8 and His10 each coordinate a divalent metal cation. 4-CDP-2-C-methyl-D-erythritol 2-phosphate is bound by residues 8–10 (DVH) and 34–35 (HS). His42 contacts a divalent metal cation. 4-CDP-2-C-methyl-D-erythritol 2-phosphate-binding positions include 56–58 (DIG), 61–65 (FPDTD), 100–106 (AQAPKMA), 132–135 (TTTE), Phe139, and Arg142.

This sequence belongs to the IspF family. Homotrimer. It depends on a divalent metal cation as a cofactor.

It catalyses the reaction 4-CDP-2-C-methyl-D-erythritol 2-phosphate = 2-C-methyl-D-erythritol 2,4-cyclic diphosphate + CMP. The protein operates within isoprenoid biosynthesis; isopentenyl diphosphate biosynthesis via DXP pathway; isopentenyl diphosphate from 1-deoxy-D-xylulose 5-phosphate: step 4/6. Its function is as follows. Involved in the biosynthesis of isopentenyl diphosphate (IPP) and dimethylallyl diphosphate (DMAPP), two major building blocks of isoprenoid compounds. Catalyzes the conversion of 4-diphosphocytidyl-2-C-methyl-D-erythritol 2-phosphate (CDP-ME2P) to 2-C-methyl-D-erythritol 2,4-cyclodiphosphate (ME-CPP) with a corresponding release of cytidine 5-monophosphate (CMP). This Saccharophagus degradans (strain 2-40 / ATCC 43961 / DSM 17024) protein is 2-C-methyl-D-erythritol 2,4-cyclodiphosphate synthase.